The primary structure comprises 87 residues: UPF0367 protein P9211_01391 (87 aa).

The protein belongs to the UPF0367 family.

This is UPF0367 protein P9211_01391 from Prochlorococcus marinus (strain MIT 9211).